The primary structure comprises 185 residues: Ribosome-recycling factor (185 aa).

The protein belongs to the RRF family.

It localises to the cytoplasm. In terms of biological role, responsible for the release of ribosomes from messenger RNA at the termination of protein biosynthesis. May increase the efficiency of translation by recycling ribosomes from one round of translation to another. This Novosphingobium aromaticivorans (strain ATCC 700278 / DSM 12444 / CCUG 56034 / CIP 105152 / NBRC 16084 / F199) protein is Ribosome-recycling factor.